The following is a 1083-amino-acid chain: Integrator complex subunit 3 homolog (1083 aa).

Disordered regions lie at residues 551–579, 929–953, and 1014–1083; these read NEAV…DLPL, YPSS…TPSA, and AVGR…NDSD. Over residues 942–953 the composition is skewed to low complexity; the sequence is KGSSAASSTPSA. 4 positions are modified to phosphoserine: S1053, S1054, S1058, and S1059. Positions 1066 to 1077 are enriched in basic residues; it reads HKVTQPAKKRKK.

This sequence belongs to the Integrator subunit 3 family. As to quaternary structure, belongs to the multiprotein complex Integrator, at least composed of IntS1, IntS2, IntS3, IntS4, omd/IntS5, IntS6, defl/IntS7, IntS8, IntS9, IntS10, IntS11, IntS12, asun/IntS13, IntS14 and IntS15. The core complex associates with protein phosphatase 2A subunits mts/PP2A and Pp2A-29B, to form the Integrator-PP2A (INTAC) complex.

Its subcellular location is the nucleus. The protein localises to the cytoplasm. In terms of biological role, component of the integrator complex, a multiprotein complex that terminates RNA polymerase II (Pol II) transcription in the promoter-proximal region of genes. The integrator complex provides a quality checkpoint during transcription elongation by driving premature transcription termination of transcripts that are unfavorably configured for transcriptional elongation: the complex terminates transcription by (1) catalyzing dephosphorylation of the C-terminal domain (CTD) of Pol II subunit Polr2A/Rbp1 and Spt5, and (2) degrading the exiting nascent RNA transcript via endonuclease activity. The integrator complex is also involved in the 3'-end processing of the U7 snRNA, and also the spliceosomal snRNAs U1, U2, U4 and U5. This is Integrator complex subunit 3 homolog (IntS3) from Drosophila grimshawi (Hawaiian fruit fly).